The primary structure comprises 665 residues: UvrABC system protein B (665 aa).

The Helicase ATP-binding domain maps to 25–412; that stretch reads ASIEGGNRYQ…ENRIVEQVIR (388 aa). 38–45 contributes to the ATP binding site; sequence GATGTGKT. The Beta-hairpin signature appears at 91–114; the sequence is YYDYYQPEAYIPVTDTYIEKTAAI. The region spanning 429-583 is the Helicase C-terminal domain; that stretch reads QIDDLLGEIK…VAYNKLHGIT (155 aa). Positions 626 to 661 constitute a UVR domain; it reads PNLIDKLEAQMKEASKKLEFEEAAKLRDRIKQLRDK.

Belongs to the UvrB family. Forms a heterotetramer with UvrA during the search for lesions. Interacts with UvrC in an incision complex.

The protein resides in the cytoplasm. In terms of biological role, the UvrABC repair system catalyzes the recognition and processing of DNA lesions. A damage recognition complex composed of 2 UvrA and 2 UvrB subunits scans DNA for abnormalities. Upon binding of the UvrA(2)B(2) complex to a putative damaged site, the DNA wraps around one UvrB monomer. DNA wrap is dependent on ATP binding by UvrB and probably causes local melting of the DNA helix, facilitating insertion of UvrB beta-hairpin between the DNA strands. Then UvrB probes one DNA strand for the presence of a lesion. If a lesion is found the UvrA subunits dissociate and the UvrB-DNA preincision complex is formed. This complex is subsequently bound by UvrC and the second UvrB is released. If no lesion is found, the DNA wraps around the other UvrB subunit that will check the other stand for damage. In Nostoc sp. (strain PCC 7120 / SAG 25.82 / UTEX 2576), this protein is UvrABC system protein B.